We begin with the raw amino-acid sequence, 137 residues long: NADH-quinone oxidoreductase subunit A (137 aa).

3 consecutive transmembrane segments (helical) span residues 12–32 (WGFA…LGVS), 66–86 (FYLV…LFAW), and 96–116 (TGFV…VYLF).

Belongs to the complex I subunit 3 family. In terms of assembly, NDH-1 is composed of 13 different subunits. Subunits NuoA, H, J, K, L, M, N constitute the membrane sector of the complex.

The protein localises to the cell inner membrane. It carries out the reaction a quinone + NADH + 5 H(+)(in) = a quinol + NAD(+) + 4 H(+)(out). Its function is as follows. NDH-1 shuttles electrons from NADH, via FMN and iron-sulfur (Fe-S) centers, to quinones in the respiratory chain. The immediate electron acceptor for the enzyme in this species is believed to be ubiquinone. Couples the redox reaction to proton translocation (for every two electrons transferred, four hydrogen ions are translocated across the cytoplasmic membrane), and thus conserves the redox energy in a proton gradient. This is NADH-quinone oxidoreductase subunit A from Pseudomonas fluorescens (strain Pf0-1).